The primary structure comprises 382 residues: Dual-specificity RNA methyltransferase RlmN (382 aa).

Glu91 acts as the Proton acceptor in catalysis. In terms of domain architecture, Radical SAM core spans 97 to 339 (ETDRGTLCIS…TTVRKTRGDD (243 aa)). Cys104 and Cys344 are disulfide-bonded. Positions 111, 115, and 118 each coordinate [4Fe-4S] cluster. Residues 165–166 (GE), Ser197, 219–221 (SLH), and Asn301 each bind S-adenosyl-L-methionine. The active-site S-methylcysteine intermediate is the Cys344.

Belongs to the radical SAM superfamily. RlmN family. [4Fe-4S] cluster serves as cofactor.

The protein resides in the cytoplasm. The enzyme catalyses adenosine(2503) in 23S rRNA + 2 reduced [2Fe-2S]-[ferredoxin] + 2 S-adenosyl-L-methionine = 2-methyladenosine(2503) in 23S rRNA + 5'-deoxyadenosine + L-methionine + 2 oxidized [2Fe-2S]-[ferredoxin] + S-adenosyl-L-homocysteine. The catalysed reaction is adenosine(37) in tRNA + 2 reduced [2Fe-2S]-[ferredoxin] + 2 S-adenosyl-L-methionine = 2-methyladenosine(37) in tRNA + 5'-deoxyadenosine + L-methionine + 2 oxidized [2Fe-2S]-[ferredoxin] + S-adenosyl-L-homocysteine. Its function is as follows. Specifically methylates position 2 of adenine 2503 in 23S rRNA and position 2 of adenine 37 in tRNAs. m2A2503 modification seems to play a crucial role in the proofreading step occurring at the peptidyl transferase center and thus would serve to optimize ribosomal fidelity. This Polaromonas naphthalenivorans (strain CJ2) protein is Dual-specificity RNA methyltransferase RlmN.